The following is a 662-amino-acid chain: Carboxysome assembly protein CsoS2 (662 aa).

Residues 1-227 are N-terminal domain; it reads MSTSNAQSGR…KRRNAKEAPQ (227 aa). Disordered regions lie at residues 1–258, 277–322, and 342–419; these read MSTS…SESG, NCDV…TCSA, and PAKS…RGSC. One copy of the N-repeat 1 repeat lies at 8 to 27; it reads SGRAAAIARRNAQVKGKGYT. 2 stretches are compositionally biased toward low complexity: residues 28–57 and 64–76; these read ASAAPAAPRKPAAPVAEPVVAAAPAPSQPS and SVAPTATPAASAA. The stretch at 58–72 is one N-repeat 2 repeat; sequence RSRRKVSVAPTATPA. Positions 120–135 are enriched in basic and acidic residues; that stretch reads RQAKAEKPTKRSERRT. A compositionally biased stretch (polar residues) spans 141–150; the sequence is VASQQPSGRL. The N-repeat 3 repeat unit spans residues 147-168; that stretch reads SGRLQSKAYRKAQAKGKAGQEA. Low complexity-rich tracts occupy residues 161–170, 237–247, and 289–300; these read KGKAGQEAFK, GQSVSGTQVGQ, and VTQTQTTRGQVV. M-repeat repeat units follow at residues 228–278, 288–338, 388–436, 446–491, and 496–550; these read KVGE…SKNC, KVTQ…KMYC, KVMP…AKAC, KVTA…TEQF, and VDEQ…AMVC. The interval 228–559 is middle region; the sequence is KVGESQTLHG…CDSTNAAAPG (332 aa). Residues 391–404 are compositionally biased toward polar residues; the sequence is PSQTAKGNTTTGSQ. Residues 560-631 form a C-terminal domain region; sequence ESDFPAMIGQ…SPMGASQYRP (72 aa). Residues 564 to 572 form a C-repeat 1 repeat; that stretch reads PAMIGQAQP. Disordered regions lie at residues 588 to 607 and 619 to 662; these read KITGDGWDRGSKVTGTDGPW and AGQS…GARA. Residues 632–662 form a C-terminal peptide region; that stretch reads VNNEVPMSPITGSSGNTDTGAKVTLSGGARA. Positions 641 to 650 are enriched in polar residues; the sequence is ITGSSGNTDT.

Belongs to the CsoS2 family. Interacts via its N-terminal repeats with RuBisCO. Interacts with the major shell protein CsoS1. In terms of processing, unlike H.neapolitanus and predictions for P.marinus strain MIT 9313, this protein is not thought to have ribosomal frameshifting.

Its subcellular location is the carboxysome. Required for alpha-carboxysome (Cb) assembly, mediates interaction between RuBisCO and the Cb shell. The protein is probably intrinsically disordered. The C-terminal repeats act as the encapsulation signal to target proteins to the Cb; they are necessary and sufficient to target both CsoS2 and foreign proteins to the Cb. The N-terminal repeats of this protein bind simultaneously to both subunits of RuBisCO. Probably also interacts with the major shell proteins (CsoS1); that interaction would increase the local concentration of CsoS2 so that it can condense RuBisCO and full carboxysomes can be formed. The polypeptide is Carboxysome assembly protein CsoS2 (Hydrogenovibrio crunogenus (strain DSM 25203 / XCL-2) (Thiomicrospira crunogena)).